Reading from the N-terminus, the 385-residue chain is Muconate cycloisomerase 1-2 (385 aa).

The active site involves lysine 171. 2 residues coordinate Mn(2+): glutamate 226 and aspartate 251.

It belongs to the mandelate racemase/muconate lactonizing enzyme family. Homooctamer. Requires Mn(2+) as cofactor.

The enzyme catalyses (S)-muconolactone = cis,cis-muconate + H(+). The protein operates within aromatic compound metabolism; beta-ketoadipate pathway; 5-oxo-4,5-dihydro-2-furylacetate from catechol: step 2/3. Its function is as follows. Catalyzes a syn cycloisomerization. In Acinetobacter lwoffii, this protein is Muconate cycloisomerase 1-2 (catB2).